Reading from the N-terminus, the 157-residue chain is Endoribonuclease YbeY (157 aa).

3 residues coordinate Zn(2+): His118, His122, and His128.

The protein belongs to the endoribonuclease YbeY family. Requires Zn(2+) as cofactor.

The protein resides in the cytoplasm. Functionally, single strand-specific metallo-endoribonuclease involved in late-stage 70S ribosome quality control and in maturation of the 3' terminus of the 16S rRNA. This chain is Endoribonuclease YbeY, found in Shewanella loihica (strain ATCC BAA-1088 / PV-4).